We begin with the raw amino-acid sequence, 377 residues long: Virion membrane protein OPG143 (377 aa).

G2 is lipidated: N-myristoyl glycine; by host. The Virion surface segment spans residues 2 to 341 (GAAVTLNRIK…VVNDKIKLPT (340 aa)). A helical membrane pass occupies residues 342-362 (WLGASITLVVISVIFYFISIY). At 363-377 (SRPKIKTNDINVRRR) the chain is on the intravirion side.

Belongs to the orthopoxvirus OPG143 family. As to quaternary structure, part of a stable entry-fusion complex (EFC) which is at least composed of proteins OPG143, OPG147, OPG155, OPG086, OPG094, OPG107, OPG104, and OPG099. Formation of the viral membrane is necessary for the assembly of the complex. Interacts with OPG094. Interacts with OPG153. Most cysteines are linked by disulfide bonds. They are created by the viral disulfide bond formation pathway, a poxvirus-specific redox pathway that operates on the cytoplasmic side of the MV membranes.

It is found in the virion membrane. Envelope protein part of the entry-fusion complex responsible for the virus membrane fusion with host cell membrane during virus entry. Also plays a role in cell-cell fusion (syncytium formation). This chain is Virion membrane protein OPG143 (OPG143), found in Monkeypox virus.